We begin with the raw amino-acid sequence, 195 residues long: Probable molybdenum cofactor guanylyltransferase (195 aa).

GTP contacts are provided by residues Leu6–Gly8, Lys18, Asp67, and Asp93. Residue Asp93 participates in Mg(2+) binding.

The protein belongs to the MobA family. Mg(2+) is required as a cofactor.

The protein resides in the cytoplasm. It carries out the reaction Mo-molybdopterin + GTP + H(+) = Mo-molybdopterin guanine dinucleotide + diphosphate. Its function is as follows. Transfers a GMP moiety from GTP to Mo-molybdopterin (Mo-MPT) cofactor (Moco or molybdenum cofactor) to form Mo-molybdopterin guanine dinucleotide (Mo-MGD) cofactor. The sequence is that of Probable molybdenum cofactor guanylyltransferase from Thermococcus sibiricus (strain DSM 12597 / MM 739).